Here is a 311-residue protein sequence, read N- to C-terminus: Acetyl-coenzyme A carboxylase carboxyl transferase subunit beta (311 aa).

Residues 32 to 299 enclose the CoA carboxyltransferase N-terminal domain; the sequence is LWVKCPVSEE…TSMPAALTPP (268 aa). Positions 291 to 311 are disordered; it reads SMPAALTPPAPDHVVADGGSH.

Belongs to the AccD/PCCB family. Acetyl-CoA carboxylase is a heterohexamer composed of biotin carboxyl carrier protein (AccB), biotin carboxylase (AccC) and two subunits each of ACCase subunit alpha (AccA) and ACCase subunit beta (AccD).

The protein resides in the cytoplasm. It carries out the reaction N(6)-carboxybiotinyl-L-lysyl-[protein] + acetyl-CoA = N(6)-biotinyl-L-lysyl-[protein] + malonyl-CoA. Its pathway is lipid metabolism; malonyl-CoA biosynthesis; malonyl-CoA from acetyl-CoA: step 1/1. In terms of biological role, component of the acetyl coenzyme A carboxylase (ACC) complex. Biotin carboxylase (BC) catalyzes the carboxylation of biotin on its carrier protein (BCCP) and then the CO(2) group is transferred by the transcarboxylase to acetyl-CoA to form malonyl-CoA. The protein is Acetyl-coenzyme A carboxylase carboxyl transferase subunit beta of Maricaulis maris (strain MCS10) (Caulobacter maris).